The following is a 502-amino-acid chain: MSELRDTRLEKANTLEQLGQGPYALTFDPSHRMAELQADHADLPNGEERELSVAVAGRVMTRRVMGKLAFFTLADETGTIQLFLEKAGLEAQQEGWFKQITSLVDAGDWLGVSGTLRRTDRGELSVKVRDWRMLSKSLQPLPDKWHGLADVEKRYRQRYLDLIVSPQSRETFRRRALLVSGIRRWLDERQFLEIETPVLQSEAGGADARPFITHHNTLDLPLYLRIATELHLKRLVVGGFERVYELGRIFRNEGMSTRHNPEFTSVEVYQAYSDYIGMMELTEAMIAEVCQQVCGGTRIHYQGTDIDLTPPWRRATMHELVEEATGLNFEAFTTRAQAAEAMEAAGLEVPGAADSVGRLLNEAFEQRVEASLIQPTFVTDYPIEISPLARKHRSKPGLVERFELFIVGRETANAFSELIDPVDQRQRLEAQQARKAAGDLEAQGLDEDFVHALEVGMPPTGGLGIGIDRLVMLLTDSPSIRDVIAFPLMRPESRPDEAPSVG.

Mg(2+)-binding residues include Glu-403 and Glu-410.

This sequence belongs to the class-II aminoacyl-tRNA synthetase family. In terms of assembly, homodimer. It depends on Mg(2+) as a cofactor.

The protein localises to the cytoplasm. It carries out the reaction tRNA(Lys) + L-lysine + ATP = L-lysyl-tRNA(Lys) + AMP + diphosphate. This is Lysine--tRNA ligase from Synechococcus sp. (strain CC9902).